The following is a 120-amino-acid chain: Ribosome-binding factor A (120 aa).

It belongs to the RbfA family. In terms of assembly, monomer. Binds 30S ribosomal subunits, but not 50S ribosomal subunits or 70S ribosomes.

The protein localises to the cytoplasm. Its function is as follows. One of several proteins that assist in the late maturation steps of the functional core of the 30S ribosomal subunit. Associates with free 30S ribosomal subunits (but not with 30S subunits that are part of 70S ribosomes or polysomes). Required for efficient processing of 16S rRNA. May interact with the 5'-terminal helix region of 16S rRNA. In Buchnera aphidicola subsp. Acyrthosiphon pisum (strain 5A), this protein is Ribosome-binding factor A.